Here is a 264-residue protein sequence, read N- to C-terminus: 3-methyl-2-oxobutanoate hydroxymethyltransferase (264 aa).

Mg(2+) is bound by residues Asp45 and Asp84. 3-methyl-2-oxobutanoate contacts are provided by residues 45 to 46, Asp84, and Lys112; that span reads DS. Glu114 provides a ligand contact to Mg(2+). Catalysis depends on Glu181, which acts as the Proton acceptor.

The protein belongs to the PanB family. Homodecamer; pentamer of dimers. Mg(2+) is required as a cofactor.

Its subcellular location is the cytoplasm. The catalysed reaction is 3-methyl-2-oxobutanoate + (6R)-5,10-methylene-5,6,7,8-tetrahydrofolate + H2O = 2-dehydropantoate + (6S)-5,6,7,8-tetrahydrofolate. The protein operates within cofactor biosynthesis; (R)-pantothenate biosynthesis; (R)-pantoate from 3-methyl-2-oxobutanoate: step 1/2. In terms of biological role, catalyzes the reversible reaction in which hydroxymethyl group from 5,10-methylenetetrahydrofolate is transferred onto alpha-ketoisovalerate to form ketopantoate. This chain is 3-methyl-2-oxobutanoate hydroxymethyltransferase, found in Aeromonas hydrophila subsp. hydrophila (strain ATCC 7966 / DSM 30187 / BCRC 13018 / CCUG 14551 / JCM 1027 / KCTC 2358 / NCIMB 9240 / NCTC 8049).